The sequence spans 264 residues: Proteasome assembly chaperone 2 (264 aa).

Thr137 is modified (phosphothreonine).

Belongs to the PSMG2 family. As to quaternary structure, forms a heterodimer with PSMG1. The PSMG1-PSMG2 heterodimer interacts directly with the PSMA5 and PSMA7 proteasome alpha subunits. Degraded by the proteasome upon completion of 20S proteasome maturation. In terms of tissue distribution, widely expressed with highest levels in lung, brain and colon. Moderately expressed in muscle, stomach, spleen and heart. Weakly expressed in small intestine, pancreas and liver. Highly expressed in hepatocellular carcinomas with low levels in surrounding liver tissue.

It is found in the nucleus. In terms of biological role, chaperone protein which promotes assembly of the 20S proteasome as part of a heterodimer with PSMG1. The PSMG1-PSMG2 heterodimer binds to the PSMA5 and PSMA7 proteasome subunits, promotes assembly of the proteasome alpha subunits into the heteroheptameric alpha ring and prevents alpha ring dimerization. The sequence is that of Proteasome assembly chaperone 2 from Homo sapiens (Human).